Reading from the N-terminus, the 861-residue chain is Probable linoleate 9S-lipoxygenase 8 (861 aa).

One can recognise a PLAT domain in the interval 33-160; sequence FTDLASSLTG…NYKSDRIFFA (128 aa). One can recognise a Lipoxygenase domain in the interval 163–861; it reads PYLPSETPEL…GKGIPNSVSI (699 aa). Positions 220 to 245 are disordered; that stretch reads TLGGSAEYPYPRRGRTGRPPTRTDPK. Positions 522, 527, 713, 717, and 861 each coordinate Fe cation.

This sequence belongs to the lipoxygenase family. As to quaternary structure, monomer. Fe cation is required as a cofactor.

The protein localises to the cytoplasm. The enzyme catalyses (9Z,12Z)-octadecadienoate + O2 = (9S)-hydroperoxy-(10E,12Z)-octadecadienoate. It participates in lipid metabolism; oxylipin biosynthesis. In terms of biological role, plant lipoxygenases may be involved in a number of diverse aspects of plant physiology including growth and development, pest resistance, and senescence or responses to wounding. Catalyzes the hydroperoxidation of lipids containing a cis,cis-1,4-pentadiene structure. This chain is Probable linoleate 9S-lipoxygenase 8 (LOX1.8), found in Solanum tuberosum (Potato).